Consider the following 207-residue polypeptide: Chaperone protein TorD (207 aa).

Belongs to the TorD/DmsD family. TorD subfamily.

It is found in the cytoplasm. In terms of biological role, involved in the biogenesis of TorA. Acts on TorA before the insertion of the molybdenum cofactor and, as a result, probably favors a conformation of the apoenzyme that is competent for acquiring the cofactor. The sequence is that of Chaperone protein TorD from Aggregatibacter aphrophilus (strain NJ8700) (Haemophilus aphrophilus).